A 159-amino-acid polypeptide reads, in one-letter code: Transcription elongation factor GreA (159 aa).

Belongs to the GreA/GreB family.

In terms of biological role, necessary for efficient RNA polymerase transcription elongation past template-encoded arresting sites. The arresting sites in DNA have the property of trapping a certain fraction of elongating RNA polymerases that pass through, resulting in locked ternary complexes. Cleavage of the nascent transcript by cleavage factors such as GreA or GreB allows the resumption of elongation from the new 3'terminus. GreA releases sequences of 2 to 3 nucleotides. This chain is Transcription elongation factor GreA, found in Orientia tsutsugamushi (strain Ikeda) (Rickettsia tsutsugamushi).